Reading from the N-terminus, the 390-residue chain is MTTLSPKDVVIVDGVRTAMGKSKNGMFRNVRADSMSAELVRALVKRNDFDTNEVEDIIWGCVNQTLEQGMNIGRNIGLLADIPKTAGGQTVNRLCGSSMQALHTAAAQIMTNQGDVFIIGGVEHMGHVGMMHGIDINPEASKHYAKASNMMGLTAEMLGRMNGITREQQDEFGYESHRRAWAATQAGRFDNEIIGIEGHDAEGRLQLCTVDEVIRPDTSMESLAKLRPVFDPANGTVTAATSSALSDGASAMLVMSAQKAKDLGLKPRARIRSMAIAGCDAAIMGYGPVPATQKALKRAGLTVEDMQTIELNEAFAAQGLSVLKALNLLDKRDIINVNGGAIALGHPLGCSGARITVTLLNAMEQMDTEIGLATMCIGLGQGISTVIERV.

C95 functions as the Acyl-thioester intermediate in the catalytic mechanism. Catalysis depends on proton acceptor residues H346 and C376.

The protein belongs to the thiolase-like superfamily. Thiolase family. In terms of assembly, heterotetramer of two alpha chains (FadB) and two beta chains (FadA).

The protein resides in the cytoplasm. It catalyses the reaction an acyl-CoA + acetyl-CoA = a 3-oxoacyl-CoA + CoA. It functions in the pathway lipid metabolism; fatty acid beta-oxidation. In terms of biological role, catalyzes the final step of fatty acid oxidation in which acetyl-CoA is released and the CoA ester of a fatty acid two carbons shorter is formed. The chain is 3-ketoacyl-CoA thiolase from Psychrobacter sp. (strain PRwf-1).